Here is a 184-residue protein sequence, read N- to C-terminus: Probable RNA 2'-phosphotransferase (184 aa).

It belongs to the KptA/TPT1 family.

Its function is as follows. Removes the 2'-phosphate from RNA via an intermediate in which the phosphate is ADP-ribosylated by NAD followed by a presumed transesterification to release the RNA and generate ADP-ribose 1''-2''-cyclic phosphate (APPR&gt;P). May function as an ADP-ribosylase. The chain is Probable RNA 2'-phosphotransferase from Rhizobium johnstonii (strain DSM 114642 / LMG 32736 / 3841) (Rhizobium leguminosarum bv. viciae).